The chain runs to 260 residues: Homeobox protein Hox-D11b (260 aa).

Residues 1–14 are compositionally biased toward low complexity; it reads MFSSSFSYPSKTSP. Disordered stretches follow at residues 1–21 and 151–206; these read MFSS…PFLA and ITPG…CTRR. Basic and acidic residues predominate over residues 167-179; that stretch reads RSPDGESSEERAG. Residues 205–260 constitute a DNA-binding region (homeobox; truncated); the sequence is RRKKRCPYSKQQIIELEREFLFNIYINKDRRMQLSHLLRLTDRCVNNPLNQDSFFT.

Belongs to the Abd-B homeobox family.

The protein localises to the nucleus. Sequence-specific transcription factor which is part of a developmental regulatory system that provides cells with specific positional identities on the anterior-posterior axis. The chain is Homeobox protein Hox-D11b (hoxd11b) from Takifugu rubripes (Japanese pufferfish).